Here is a 303-residue protein sequence, read N- to C-terminus: Tyrosine-protein phosphatase 3 (303 aa).

One can recognise a Tyrosine-protein phosphatase domain in the interval 24–292; that stretch reads YMIIEGLNEE…VFLYTVSQEL (269 aa). Cys-227 functions as the Phosphocysteine intermediate in the catalytic mechanism.

The protein belongs to the protein-tyrosine phosphatase family. Non-receptor class subfamily.

The protein localises to the cytoplasm. It catalyses the reaction O-phospho-L-tyrosyl-[protein] + H2O = L-tyrosyl-[protein] + phosphate. Functionally, contributes to dephosphorylation of tyrosine 15 of cdc2. This chain is Tyrosine-protein phosphatase 3 (pyp3), found in Schizosaccharomyces pombe (strain 972 / ATCC 24843) (Fission yeast).